Consider the following 120-residue polypeptide: MAAAPKDIEKPHVGDSASVHRIRITLTSRNVRSLENVCRDLINGAKNQNLRVKGPVRMPTKTLRITTRKTPCGEGSKTWDRFQMRIHKRIIDLHSPSEIVKKITSINIEPGVEVEVTIAN.

Residues S16 and S18 each carry the phosphoserine modification.

Belongs to the universal ribosomal protein uS10 family. Expressed ubiquitously in embryos, highest expression is in the midgut.

The protein is Small ribosomal subunit protein uS10 (RpS20) of Drosophila melanogaster (Fruit fly).